Consider the following 178-residue polypeptide: Large ribosomal subunit protein uL6 (178 aa).

Belongs to the universal ribosomal protein uL6 family. As to quaternary structure, part of the 50S ribosomal subunit.

In terms of biological role, this protein binds to the 23S rRNA, and is important in its secondary structure. It is located near the subunit interface in the base of the L7/L12 stalk, and near the tRNA binding site of the peptidyltransferase center. This chain is Large ribosomal subunit protein uL6, found in Francisella tularensis subsp. tularensis (strain WY96-3418).